Consider the following 319-residue polypeptide: Thiamine pyrophosphokinase (319 aa).

The residue at position 2 (serine 2) is an N-acetylserine.

It belongs to the thiamine pyrophosphokinase family. Homodimer.

It catalyses the reaction thiamine + ATP = thiamine diphosphate + AMP + H(+). It functions in the pathway cofactor biosynthesis; thiamine diphosphate biosynthesis; thiamine diphosphate from thiamine: step 1/1. In terms of biological role, essential protein, it is the only enzyme in yeast capable of synthesizing thiamine pyrophosphate (TPP). The protein is Thiamine pyrophosphokinase of Saccharomyces cerevisiae (strain ATCC 204508 / S288c) (Baker's yeast).